Consider the following 613-residue polypeptide: Laccase 1 (613 aa).

An N-terminal signal peptide occupies residues 1-20; it reads MSRFARLLLIVALFFTGAWA. 2 consecutive Plastocyanin-like domains span residues 29–142 and 171–359; these read ITWK…IRPK and YLVV…MRIP. An N-linked (GlcNAc...) asparagine glycan is attached at Asn-74. Positions 78, 80, 122, and 124 each coordinate Cu cation. N-linked (GlcNAc...) asparagine glycans are attached at residues Asn-256, Asn-279, Asn-444, Asn-468, and Asn-484. Positions 468 to 598 constitute a Plastocyanin-like 3 domain; that stretch reads NATRDTENDG…GGMGIAILDG (131 aa). His-506, His-509, and His-511 together coordinate Cu cation. N-linked (GlcNAc...) asparagine glycosylation is present at Asn-526. Positions 580, 581, 582, and 586 each coordinate Cu cation.

The protein belongs to the multicopper oxidase family. Cu cation serves as cofactor.

It is found in the cell surface. The protein operates within pigment biosynthesis. Laccase; part of the Pks1 gene cluster that mediates the biosynthesis of an anthraquinone derivative pigment that contributes to conidial pigmentation that provides protection from UV radiation, heat and cold stress. The polyketide synthase Pks1 produces 1-acetyl-2,4,6,8-tetrahydroxy-9,10-anthraquinone though condensation of acetyl-CoA with malonyl-CoA. The dehydratase EthD and the laccase Mlac1 further convert the anthraquinone derivative into the final conidial pigment. The sequence is that of Laccase 1 from Metarhizium guizhouense (strain ARSEF 977).